The primary structure comprises 285 residues: Transmembrane protein 53-A (285 aa).

Residues 165-185 (FLALAAFAILVIILRILLYPL) traverse the membrane as a helical segment.

The protein belongs to the TMEM53 family.

The protein resides in the nucleus outer membrane. Ensures normal bone formation, through the negative regulation of bone morphogenetic protein (BMP) signaling in osteoblast lineage cells by blocking cytoplasm-nucleus translocation of phosphorylated SMAD proteins. The polypeptide is Transmembrane protein 53-A (tmem53-a) (Xenopus laevis (African clawed frog)).